A 701-amino-acid polypeptide reads, in one-letter code: Elongation factor G (701 aa).

The region spanning 8 to 290 (KRYRNIGICA…AVIEFLPAPD (283 aa)) is the tr-type G domain. GTP is bound by residues 17 to 24 (AHVDAGKT), 88 to 92 (DTPGH), and 142 to 145 (NKMD).

Belongs to the TRAFAC class translation factor GTPase superfamily. Classic translation factor GTPase family. EF-G/EF-2 subfamily.

It is found in the cytoplasm. Functionally, catalyzes the GTP-dependent ribosomal translocation step during translation elongation. During this step, the ribosome changes from the pre-translocational (PRE) to the post-translocational (POST) state as the newly formed A-site-bound peptidyl-tRNA and P-site-bound deacylated tRNA move to the P and E sites, respectively. Catalyzes the coordinated movement of the two tRNA molecules, the mRNA and conformational changes in the ribosome. The chain is Elongation factor G from Marinobacter nauticus (strain ATCC 700491 / DSM 11845 / VT8) (Marinobacter aquaeolei).